The chain runs to 537 residues: MKSPTLLSLGYMFLVLLFFQQAWAQFPRECATIEALRNGVCCPDLSPLSGPGSDRCGLSSGRGRCEVVIADSRPHSHHYPHDGRDDREGWPTRSFNRTCHCNGNFSGHNCGTCRPGWGGAACDQRVLTVRRNLLDLSTEEKNRFVRALDMAKRTTHPQFVIATRRSEEILGPDGNTPQFENISIYNYFVWTHYYSVKKTFLGAGQESFGEVDFSHEGPAFLTWHRYHLLQLERDMQEMLQDPSFSLPYWNFATGKNTCDICTDDLMGSRSNFDSTLISPNSVFSQWRVVCESLEDYDTLGTLCNSTEGGPIKRNPAGNVARPMVQRLPKPQDVAQCLEVGSYDTPPFYSNSTNSFRNTVEGYSHPTGRYDPAVRSLHNLAHLFLNGTGGQTHLSPNDPIFVLLHTFTDAVFDEWLRRYNADISTYPLENAPIGHNRQYNMVPFWPPVTNIEMFVTAPDNLGYTYEVQWPSRSFSISEIVTIAVVAALSLVAVIFAGASCLIRARSNMDEANQPLLTDQYQHYIEEYEKIHNPNQSVV.

An N-terminal signal peptide occupies residues 1 to 24 (MKSPTLLSLGYMFLVLLFFQQAWA). Topologically, residues 25–477 (QFPRECATIE…WPSRSFSISE (453 aa)) are lumenal, melanosome. Cystine bridges form between Cys30-Cys41, Cys42-Cys65, Cys56-Cys99, Cys101-Cys110, and Cys113-Cys122. 2 N-linked (GlcNAc...) asparagine glycosylation sites follow: Asn96 and Asn104. The N-linked (GlcNAc...) asparagine glycan is linked to Asn181. Zn(2+) is bound by residues His192, His215, and His224. Cystine bridges form between Cys258/Cys261 and Cys290/Cys303. N-linked (GlcNAc...) asparagine glycosylation is found at Asn304 and Asn350. His377 and His381 together coordinate Zn(2+). Asn385 carries an N-linked (GlcNAc...) asparagine glycan. Residue His404 participates in Zn(2+) binding. A helical transmembrane segment spans residues 478–501 (IVTIAVVAALSLVAVIFAGASCLI). Residues 502–537 (RARSNMDEANQPLLTDQYQHYIEEYEKIHNPNQSVV) are Cytoplasmic-facing.

Belongs to the tyrosinase family. As to quaternary structure, monomer. Interacts with ATP7A. Interacts with SLC45A2. The cofactor is Cu(2+). Zn(2+) serves as cofactor. In terms of processing, glycosylated.

The protein localises to the melanosome membrane. The catalysed reaction is 2 5,6-dihydroxyindole-2-carboxylate + O2 = 2 indole-5,6-quinone-2-carboxylate + 2 H2O. It functions in the pathway pigment biosynthesis; melanin biosynthesis. In terms of biological role, plays a role in melanin biosynthesis. Catalyzes the oxidation of 5,6-dihydroxyindole-2-carboxylic acid (DHICA) into indole-5,6-quinone-2-carboxylic acid. May regulate or influence the type of melanin synthesized. Also to a lower extent, capable of hydroxylating tyrosine and producing melanin. The chain is 5,6-dihydroxyindole-2-carboxylic acid oxidase (TYRP1) from Bos taurus (Bovine).